Reading from the N-terminus, the 339-residue chain is Pleckstrin homology domain protein opy1 (339 aa).

One can recognise a PH 1 domain in the interval 25-119 (RVLKSGWLIK…WVHVLRSTTG (95 aa)). Over residues 141–167 (ESEPNVQISDTDFDNISTEPRNQTTSP) the composition is skewed to polar residues. The disordered stretch occupies residues 141 to 170 (ESEPNVQISDTDFDNISTEPRNQTTSPLDL). A PH 2 domain is found at 233-330 (KVLMQGTIHW…WVAALKTSID (98 aa)).

As to quaternary structure, interacts (via domain PH 1) with phosphatidylinositol 4-phosphate 5-kinase its3; the interaction is direct but opy1 does not appear to regulate its3 localization or function.

It localises to the cell tip. It is found in the cell membrane. Binds phosphatidylinositol 4,5-bisphosphate (PtdIns(4,5)P2/PIP2) at the cell membrane. The chain is Pleckstrin homology domain protein opy1 from Schizosaccharomyces pombe (strain 972 / ATCC 24843) (Fission yeast).